The chain runs to 211 residues: Large ribosomal subunit protein uL3 (211 aa).

Gln-150 is subject to N5-methylglutamine.

It belongs to the universal ribosomal protein uL3 family. As to quaternary structure, part of the 50S ribosomal subunit. Forms a cluster with proteins L14 and L19. Methylated by PrmB.

One of the primary rRNA binding proteins, it binds directly near the 3'-end of the 23S rRNA, where it nucleates assembly of the 50S subunit. The protein is Large ribosomal subunit protein uL3 of Stutzerimonas stutzeri (strain A1501) (Pseudomonas stutzeri).